Here is a 205-residue protein sequence, read N- to C-terminus: Methylthioribulose-1-phosphate dehydratase (205 aa).

Residues His-96 and His-98 each contribute to the Zn(2+) site.

It belongs to the aldolase class II family. MtnB subfamily. Zn(2+) is required as a cofactor.

It catalyses the reaction 5-(methylsulfanyl)-D-ribulose 1-phosphate = 5-methylsulfanyl-2,3-dioxopentyl phosphate + H2O. It functions in the pathway amino-acid biosynthesis; L-methionine biosynthesis via salvage pathway; L-methionine from S-methyl-5-thio-alpha-D-ribose 1-phosphate: step 2/6. Catalyzes the dehydration of methylthioribulose-1-phosphate (MTRu-1-P) into 2,3-diketo-5-methylthiopentyl-1-phosphate (DK-MTP-1-P). This is Methylthioribulose-1-phosphate dehydratase from Pseudomonas aeruginosa (strain LESB58).